A 271-amino-acid polypeptide reads, in one-letter code: Formamidopyrimidine-DNA glycosylase (271 aa).

Proline 2 serves as the catalytic Schiff-base intermediate with DNA. Glutamate 3 serves as the catalytic Proton donor. The Proton donor; for beta-elimination activity role is filled by lysine 57. Residues histidine 90, arginine 109, and lysine 151 each coordinate DNA. Residues 236–270 (HVYGRGGDTCTHCGQLLSEIRLGQRATVFCSICQQ) form an FPG-type zinc finger. The Proton donor; for delta-elimination activity role is filled by arginine 260.

This sequence belongs to the FPG family. Monomer. The cofactor is Zn(2+).

It catalyses the reaction Hydrolysis of DNA containing ring-opened 7-methylguanine residues, releasing 2,6-diamino-4-hydroxy-5-(N-methyl)formamidopyrimidine.. The catalysed reaction is 2'-deoxyribonucleotide-(2'-deoxyribose 5'-phosphate)-2'-deoxyribonucleotide-DNA = a 3'-end 2'-deoxyribonucleotide-(2,3-dehydro-2,3-deoxyribose 5'-phosphate)-DNA + a 5'-end 5'-phospho-2'-deoxyribonucleoside-DNA + H(+). In terms of biological role, involved in base excision repair of DNA damaged by oxidation or by mutagenic agents. Acts as a DNA glycosylase that recognizes and removes damaged bases. Has a preference for oxidized purines, such as 7,8-dihydro-8-oxoguanine (8-oxoG). Has AP (apurinic/apyrimidinic) lyase activity and introduces nicks in the DNA strand. Cleaves the DNA backbone by beta-delta elimination to generate a single-strand break at the site of the removed base with both 3'- and 5'-phosphates. This chain is Formamidopyrimidine-DNA glycosylase, found in Shewanella piezotolerans (strain WP3 / JCM 13877).